Consider the following 610-residue polypeptide: Elongation factor 4 (610 aa).

A tr-type G domain is found at 11-193 (KYIRNFSIVA…QIVTKIPAPA (183 aa)). GTP-binding positions include 23-28 (DHGKST) and 140-143 (NKID).

This sequence belongs to the TRAFAC class translation factor GTPase superfamily. Classic translation factor GTPase family. LepA subfamily.

The protein resides in the cell membrane. It catalyses the reaction GTP + H2O = GDP + phosphate + H(+). Functionally, required for accurate and efficient protein synthesis under certain stress conditions. May act as a fidelity factor of the translation reaction, by catalyzing a one-codon backward translocation of tRNAs on improperly translocated ribosomes. Back-translocation proceeds from a post-translocation (POST) complex to a pre-translocation (PRE) complex, thus giving elongation factor G a second chance to translocate the tRNAs correctly. Binds to ribosomes in a GTP-dependent manner. The polypeptide is Elongation factor 4 (Levilactobacillus brevis (strain ATCC 367 / BCRC 12310 / CIP 105137 / JCM 1170 / LMG 11437 / NCIMB 947 / NCTC 947) (Lactobacillus brevis)).